The sequence spans 327 residues: tRNA dimethylallyltransferase (327 aa).

ATP is bound at residue 14–21 (GPTASGKT). 16-21 (TASGKT) lines the substrate pocket. Interaction with substrate tRNA stretches follow at residues 39-42 (DSAL) and 163-167 (QRIQR).

The protein belongs to the IPP transferase family. Monomer. It depends on Mg(2+) as a cofactor.

It catalyses the reaction adenosine(37) in tRNA + dimethylallyl diphosphate = N(6)-dimethylallyladenosine(37) in tRNA + diphosphate. Functionally, catalyzes the transfer of a dimethylallyl group onto the adenine at position 37 in tRNAs that read codons beginning with uridine, leading to the formation of N6-(dimethylallyl)adenosine (i(6)A). The sequence is that of tRNA dimethylallyltransferase from Xanthomonas oryzae pv. oryzae (strain KACC10331 / KXO85).